The chain runs to 249 residues: tRNA pseudouridine synthase A (249 aa).

The active-site Nucleophile is the Asp52. Tyr111 contributes to the substrate binding site.

It belongs to the tRNA pseudouridine synthase TruA family. As to quaternary structure, homodimer.

The enzyme catalyses uridine(38/39/40) in tRNA = pseudouridine(38/39/40) in tRNA. In terms of biological role, formation of pseudouridine at positions 38, 39 and 40 in the anticodon stem and loop of transfer RNAs. This is tRNA pseudouridine synthase A from Caulobacter sp. (strain K31).